The following is a 701-amino-acid chain: MAQKDVLTDLTKVRNIGIMAHIDAGKTTTTERILYYTGISYKIGEVHDGAATMDWMEQEQERGITITSAATTCFWNDNQINIIDTPGHVDFTVEVERSLRVLDGAVAVFDGKEGVEPQSEQVWRQADKYDVPRICFVNKMDKIGADFYFSVRTMEERLGANVIPIQIPVGSEGDFEGVVDLVEMKAKVWSAEAKLGEKYDVVDIPADLQEKAEEYRTKLLEAVAETDEALLDKYLGGEELTIEEIKGAIRKLTISSEAYPVLCGSAFKNKGVQPMLDAVIDYLPSPLDVPPAEGHVPGKEEELITRKPSTDEPFSALAFKVATHPFFGKLTYVRVYSGKVDSGSQVINSTKGKKERLGKLFQMHSNKENPVETASAGHIYAVIGLKDTTTGDTLSDPNHQIVLESMTFPDPVIEVAIEPKTKSDQEKLSLSIQKLAEEDPTFKVHLDQETGQTVIGGMGELHLDILVDRMRREFKVEANVGKPQVAYKETIRRKVENVEYTHKKQTGGSGQFAKVIINLEPFTGEDGATYEFENKVTGGRIPREYIPSVDAGAQDAMQYGVLAGYPLVNLKVTLLDGAFHEVDSSEMAFKIAGSQVLKKAAAQAQPVILEPIMAVEVTTPEDYMGDVIGDLNSRRGQIQAMEERSGARVVKAHVPLSEMFGYVGDLRSKTQGRANYSMVFDSYAEVPANVSKEIIAKATGQ.

One can recognise a tr-type G domain in the interval 11-287 (TKVRNIGIMA…AVIDYLPSPL (277 aa)). GTP is bound by residues 20–27 (AHIDAGKT), 84–88 (DTPGH), and 138–141 (NKMD).

It belongs to the TRAFAC class translation factor GTPase superfamily. Classic translation factor GTPase family. EF-G/EF-2 subfamily.

It is found in the cytoplasm. In terms of biological role, catalyzes the GTP-dependent ribosomal translocation step during translation elongation. During this step, the ribosome changes from the pre-translocational (PRE) to the post-translocational (POST) state as the newly formed A-site-bound peptidyl-tRNA and P-site-bound deacylated tRNA move to the P and E sites, respectively. Catalyzes the coordinated movement of the two tRNA molecules, the mRNA and conformational changes in the ribosome. This is Elongation factor G from Mycobacterium avium (strain 104).